The following is a 75-amino-acid chain: MIDTLKGWAEYLVEWAAKDPYGFLITVLLALTPLFLASAVLSWKMAKMIEAKERDQKKKQKRQENIAKAKRTKKD.

Residues 21–41 (YGFLITVLLALTPLFLASAVL) traverse the membrane as a helical segment. A coiled-coil region spans residues 49–75 (IEAKERDQKKKQKRQENIAKAKRTKKD). Basic and acidic residues predominate over residues 52 to 67 (KERDQKKKQKRQENIA). Positions 52-75 (KERDQKKKQKRQENIAKAKRTKKD) are disordered.

This sequence belongs to the SMIM15 family.

It localises to the membrane. The polypeptide is Small integral membrane protein 15 (smim15) (Xenopus laevis (African clawed frog)).